Here is a 92-residue protein sequence, read N- to C-terminus: uncharacterized protein (92 aa).

The signal sequence occupies residues 1-29 (MAAQTDYKKQVVGILLSLAFVLFVFSFSE).

This is an uncharacterized protein from Bacillus subtilis (strain 168).